The following is a 244-amino-acid chain: Isoprenyl transferase (244 aa).

Asp20 is an active-site residue. Asp20 serves as a coordination point for Mg(2+). Substrate contacts are provided by residues 21 to 24 (GNGR), Trp25, Arg33, His37, and 65 to 67 (SSE). The active-site Proton acceptor is Asn68. Substrate contacts are provided by residues Trp69, Arg71, Arg188, and 194–196 (RIS). Glu207 is a Mg(2+) binding site.

The protein belongs to the UPP synthase family. In terms of assembly, homodimer. Requires Mg(2+) as cofactor.

Its function is as follows. Catalyzes the condensation of isopentenyl diphosphate (IPP) with allylic pyrophosphates generating different type of terpenoids. In Rhodopirellula baltica (strain DSM 10527 / NCIMB 13988 / SH1), this protein is Isoprenyl transferase.